Here is a 205-residue protein sequence, read N- to C-terminus: Protein GrpE (205 aa).

It belongs to the GrpE family. In terms of assembly, homodimer.

The protein resides in the cytoplasm. Its function is as follows. Participates actively in the response to hyperosmotic and heat shock by preventing the aggregation of stress-denatured proteins, in association with DnaK and GrpE. It is the nucleotide exchange factor for DnaK and may function as a thermosensor. Unfolded proteins bind initially to DnaJ; upon interaction with the DnaJ-bound protein, DnaK hydrolyzes its bound ATP, resulting in the formation of a stable complex. GrpE releases ADP from DnaK; ATP binding to DnaK triggers the release of the substrate protein, thus completing the reaction cycle. Several rounds of ATP-dependent interactions between DnaJ, DnaK and GrpE are required for fully efficient folding. The polypeptide is Protein GrpE (Shewanella loihica (strain ATCC BAA-1088 / PV-4)).